A 651-amino-acid polypeptide reads, in one-letter code: p-hydroxybenzoic acid efflux pump subunit AaeB (651 aa).

The next 11 helical transmembrane spans lie at 11 to 31, 41 to 61, 67 to 87, 91 to 111, 119 to 139, 150 to 170, 368 to 388, 405 to 425, 429 to 449, 455 to 475, and 481 to 501; these read FAFKLSFAIVAALFLGFHLQL, AAIVSAGPAFAAGGEPFSGAI, LRIIGTFIGCIGGLVIIVLTI, VLTLMLCCLWAGICTWISSLV, FGLAGYTALIIIVTTGETPLL, EIVLGIVCAVMADLLFSPRSI, LFWLWTGWTSGAGCMVMIAVV, FLVGVIIALPIGALYFMFIIP, QSMLLLCISLGVLAFIIGIEV, GSLGTLASTINIIVLSNPMIF, and LDSALGQIVGCFVSLIVLLLI.

The protein belongs to the aromatic acid exporter ArAE (TC 2.A.85) family.

The protein localises to the cell inner membrane. Forms an efflux pump with AaeA. Could function as a metabolic relief valve, allowing to eliminate certain compounds when they accumulate to high levels in the cell. This is p-hydroxybenzoic acid efflux pump subunit AaeB from Yersinia pseudotuberculosis serotype O:1b (strain IP 31758).